The primary structure comprises 606 residues: Elongation factor 4 (606 aa).

A tr-type G domain is found at 11 to 193 (PHIRNFSIIA…RLVRDVPPPK (183 aa)). Residues 23–28 (DHGKST) and 140–143 (NKMD) contribute to the GTP site.

It belongs to the TRAFAC class translation factor GTPase superfamily. Classic translation factor GTPase family. LepA subfamily.

It localises to the cell inner membrane. The catalysed reaction is GTP + H2O = GDP + phosphate + H(+). In terms of biological role, required for accurate and efficient protein synthesis under certain stress conditions. May act as a fidelity factor of the translation reaction, by catalyzing a one-codon backward translocation of tRNAs on improperly translocated ribosomes. Back-translocation proceeds from a post-translocation (POST) complex to a pre-translocation (PRE) complex, thus giving elongation factor G a second chance to translocate the tRNAs correctly. Binds to ribosomes in a GTP-dependent manner. This Chromohalobacter salexigens (strain ATCC BAA-138 / DSM 3043 / CIP 106854 / NCIMB 13768 / 1H11) protein is Elongation factor 4.